The following is a 187-amino-acid chain: Large ribosomal subunit protein uL22B (187 aa).

Belongs to the universal ribosomal protein uL22 family. In terms of assembly, component of the large ribosomal subunit (LSU). Mature yeast ribosomes consist of a small (40S) and a large (60S) subunit. The 40S small subunit contains 1 molecule of ribosomal RNA (18S rRNA) and at least 33 different proteins. The large 60S subunit contains 3 rRNA molecules (25S, 5.8S and 5S rRNA) and at least 46 different proteins. uL22 is associated with the polypeptide exit tunnel.

It localises to the cytoplasm. Functionally, component of the ribosome, a large ribonucleoprotein complex responsible for the synthesis of proteins in the cell. The small ribosomal subunit (SSU) binds messenger RNAs (mRNAs) and translates the encoded message by selecting cognate aminoacyl-transfer RNA (tRNA) molecules. The large subunit (LSU) contains the ribosomal catalytic site termed the peptidyl transferase center (PTC), which catalyzes the formation of peptide bonds, thereby polymerizing the amino acids delivered by tRNAs into a polypeptide chain. The nascent polypeptides leave the ribosome through a tunnel in the LSU and interact with protein factors that function in enzymatic processing, targeting, and the membrane insertion of nascent chains at the exit of the ribosomal tunnel. The polypeptide is Large ribosomal subunit protein uL22B (rpl1702) (Schizosaccharomyces pombe (strain 972 / ATCC 24843) (Fission yeast)).